The chain runs to 78 residues: Toxin OAIP 5 (78 aa).

The first 19 residues, Met1–Ala19, serve as a signal peptide directing secretion. The propeptide occupies Glu20 to Arg40. 3 cysteine pairs are disulfide-bonded: Cys43–Cys56, Cys47–Cys70, and Cys64–Cys75.

The protein belongs to the neurotoxin 12 (Hwtx-2) family. 05 (OAIP-5) subfamily. Expressed by the venom gland.

The protein localises to the secreted. Probable ion channel inhibitor. Shows insecticidal activity when injected into mealworms. In Selenotypus plumipes (Australian featherleg tarantula), this protein is Toxin OAIP 5.